The primary structure comprises 446 residues: Putative ankyrin repeat protein L273 (446 aa).

ANK repeat units lie at residues 71-100, 124-153, 206-237, 245-277, 303-332, and 365-394; these read NGEF…KSNM, DHNK…RMRP, TDIE…KILM, VWVS…KMHV, ELEY…NSYY, and YTDI…QQII.

This is Putative ankyrin repeat protein L273 from Acanthamoeba polyphaga (Amoeba).